Here is an 857-residue protein sequence, read N- to C-terminus: RNA-directed RNA polymerase 2a (857 aa).

Residues 511–624 enclose the RdRp catalytic domain; it reads KHCLEIDLSK…FSLLPPVGDP (114 aa). The segment covering 780–789 has biased composition (basic and acidic residues); the sequence is IERRCNDKRR. The tract at residues 780 to 829 is disordered; that stretch reads IERRCNDKRRTPTGSYGGGEEAETKVSQTESTGTRSQKSQRESAFKSQTV. The span at 804-816 shows a compositional bias: polar residues; sequence KVSQTESTGTRSQ.

The protein belongs to the ssRNA positive-strand viruses RNA-directed RNA polymerase family. In terms of assembly, interacts with replication protein 1a.

It catalyses the reaction RNA(n) + a ribonucleoside 5'-triphosphate = RNA(n+1) + diphosphate. In terms of biological role, RNA-dependent RNA polymerase which replicates the viral genome composed of 3 RNA segments, RNA1, RNA2 and RNA3. This chain is RNA-directed RNA polymerase 2a, found in Cucumis sativus (Cucumber).